The sequence spans 702 residues: Ferrioxamine B receptor (702 aa).

The N-terminal stretch at 1–30 (MPLEMFMFATTRMALLIGGAIGGATFPLFA) is a signal peptide. The region spanning 55-168 (PDIETPQSVS…PGGIVALTSR (114 aa)) is the TBDR plug domain. Positions 173–702 (DAGGEVKLFA…SIVGSVSWAF (530 aa)) constitute a TBDR beta-barrel domain.

Belongs to the TonB-dependent receptor family.

It is found in the cell outer membrane. Ferrioxamine binding and uptake, in association with the TonB protein. This is Ferrioxamine B receptor (foxA) from Salmonella typhimurium (strain LT2 / SGSC1412 / ATCC 700720).